The chain runs to 333 residues: Chlorophyllide reductase 35.5 kDa chain (333 aa).

The segment at 1-22 (MTDAPNLKGFDARLREEAAEEP) is disordered. Residues 45–50 (GSGKSF) and lysine 74 contribute to the ATP site. A Mg(2+)-binding site is contributed by serine 49. [4Fe-4S] cluster is bound by residues cysteine 130 and cysteine 165. Position 219-220 (219-220 (NK)) interacts with ATP.

The protein belongs to the NifH/BchL/ChlL family. As to quaternary structure, homodimer. Chlorophyllide reductase is composed of three subunits; BchX, BchY and BchZ. Requires [4Fe-4S] cluster as cofactor.

The catalysed reaction is 3-deacetyl-3-vinylbacteriochlorophyllide a + 2 oxidized [2Fe-2S]-[ferredoxin] + ADP + phosphate = chlorophyllide a + 2 reduced [2Fe-2S]-[ferredoxin] + ATP + H2O + H(+). It catalyses the reaction bacteriochlorophyllide a + 2 oxidized [2Fe-2S]-[ferredoxin] + ADP + phosphate = 3-acetyl-3-devinylchlorophyllide a + 2 reduced [2Fe-2S]-[ferredoxin] + ATP + H2O + H(+). The enzyme catalyses 3-deacetyl-3-(1-hydroxyethyl)bacteriochlorophyllide a + 2 oxidized [2Fe-2S]-[ferredoxin] + ADP + phosphate = 3-devinyl-3-(1-hydroxyethyl)chlorophyllide a + 2 reduced [2Fe-2S]-[ferredoxin] + ATP + H2O + H(+). It participates in porphyrin-containing compound metabolism; bacteriochlorophyll biosynthesis. Its function is as follows. Converts chlorophylls (Chl) into bacteriochlorophylls (BChl) by reducing ring B of the tetrapyrrole. The sequence is that of Chlorophyllide reductase 35.5 kDa chain (bchX) from Rhodobacter capsulatus (strain ATCC BAA-309 / NBRC 16581 / SB1003).